A 148-amino-acid polypeptide reads, in one-letter code: Holo-[acyl-carrier-protein] synthase (148 aa).

Asp9 and Glu63 together coordinate Mg(2+).

It belongs to the P-Pant transferase superfamily. AcpS family. Requires Mg(2+) as cofactor.

The protein localises to the cytoplasm. It carries out the reaction apo-[ACP] + CoA = holo-[ACP] + adenosine 3',5'-bisphosphate + H(+). Functionally, transfers the 4'-phosphopantetheine moiety from coenzyme A to a Ser of acyl-carrier-protein. The chain is Holo-[acyl-carrier-protein] synthase from Burkholderia cenocepacia (strain HI2424).